We begin with the raw amino-acid sequence, 124 residues long: Small ribosomal subunit protein uS12 (124 aa).

Position 89 is a 3-methylthioaspartic acid (Asp89). Residues 102-124 (LDTSGVNNRKHGRSKYGTKRPKS) form a disordered region. The span at 109–124 (NRKHGRSKYGTKRPKS) shows a compositional bias: basic residues.

Belongs to the universal ribosomal protein uS12 family. In terms of assembly, part of the 30S ribosomal subunit. Contacts proteins S8 and S17. May interact with IF1 in the 30S initiation complex.

Functionally, with S4 and S5 plays an important role in translational accuracy. Interacts with and stabilizes bases of the 16S rRNA that are involved in tRNA selection in the A site and with the mRNA backbone. Located at the interface of the 30S and 50S subunits, it traverses the body of the 30S subunit contacting proteins on the other side and probably holding the rRNA structure together. The combined cluster of proteins S8, S12 and S17 appears to hold together the shoulder and platform of the 30S subunit. The protein is Small ribosomal subunit protein uS12 of Francisella philomiragia subsp. philomiragia (strain ATCC 25017 / CCUG 19701 / FSC 153 / O#319-036).